A 380-amino-acid polypeptide reads, in one-letter code: Cystathionine beta-lyase (380 aa).

K196 bears the N6-(pyridoxal phosphate)lysine mark.

It belongs to the trans-sulfuration enzymes family. Requires pyridoxal 5'-phosphate as cofactor.

The protein localises to the cytoplasm. It carries out the reaction L,L-cystathionine + H2O = L-homocysteine + pyruvate + NH4(+). The catalysed reaction is an S-substituted L-cysteine + H2O = a thiol + pyruvate + NH4(+). The protein operates within amino-acid biosynthesis; L-methionine biosynthesis via de novo pathway; L-homocysteine from L-cystathionine: step 1/1. In terms of biological role, the enzymatic degradation of amino acids in cheese is believed to generate aroma compounds and therefore to be essential for flavor development. Cystathionine beta-lyase (CBL) can convert cystathionine to homocysteine but is also able to catalyze an alpha, gamma elimination. With methionine as a substrate, it produces volatile sulfur compounds which are important for flavor formation in Gouda cheese. The polypeptide is Cystathionine beta-lyase (metC) (Lactococcus lactis subsp. lactis (strain IL1403) (Streptococcus lactis)).